The chain runs to 218 residues: Guanylate kinase (218 aa).

A Guanylate kinase-like domain is found at 17-196 (GVLLALSSPS…ALEKLNEILH (180 aa)). 24 to 31 (SPSGAGKT) is an ATP binding site.

This sequence belongs to the guanylate kinase family.

The protein resides in the cytoplasm. It carries out the reaction GMP + ATP = GDP + ADP. Essential for recycling GMP and indirectly, cGMP. This chain is Guanylate kinase, found in Maricaulis maris (strain MCS10) (Caulobacter maris).